We begin with the raw amino-acid sequence, 202 residues long: Probable 1-Cys peroxiredoxin (202 aa).

The 148-residue stretch at Ser-1–Thr-148 folds into the Thioredoxin domain. The Cysteine sulfenic acid (-SOH) intermediate role is filled by Cys-30. A Bipartite nuclear localization signal motif is present at residues Lys-178–Lys-201.

Belongs to the peroxiredoxin family. Prx6 subfamily. In terms of tissue distribution, embryos.

It is found in the nucleus. The protein resides in the cytoplasm. The enzyme catalyses a hydroperoxide + [thioredoxin]-dithiol = an alcohol + [thioredoxin]-disulfide + H2O. Functionally, thiol-specific peroxidase that catalyzes the reduction of hydrogen peroxide and organic hydroperoxides to water and alcohols, respectively. Seems to contribute to the inhibition of germination during stress. The protein is Probable 1-Cys peroxiredoxin of Bromus secalinus (Rye brome).